A 122-amino-acid polypeptide reads, in one-letter code: Large ribosomal subunit protein uL14 (122 aa).

It belongs to the universal ribosomal protein uL14 family. Part of the 50S ribosomal subunit. Forms a cluster with proteins L3 and L19. In the 70S ribosome, L14 and L19 interact and together make contacts with the 16S rRNA in bridges B5 and B8.

Functionally, binds to 23S rRNA. Forms part of two intersubunit bridges in the 70S ribosome. The sequence is that of Large ribosomal subunit protein uL14 from Bordetella avium (strain 197N).